Consider the following 358-residue polypeptide: DNA integrity scanning protein DisA (358 aa).

The region spanning 9–147 is the DAC domain; that stretch reads KQDLSEILQF…ENMKYILKDI (139 aa). ATP is bound by residues glycine 76, leucine 94, and 107–111; that span reads MRHRT.

The protein belongs to the DisA family. As to quaternary structure, homooctamer. Mg(2+) serves as cofactor.

It carries out the reaction 2 ATP = 3',3'-c-di-AMP + 2 diphosphate. In terms of biological role, participates in a DNA-damage check-point that is active prior to asymmetric division when DNA is damaged. DisA forms globular foci that rapidly scan along the chromosomes during sporulation, searching for lesions. When a lesion is present, DisA pauses at the lesion site. This triggers a cellular response that culminates in a temporary block in sporulation initiation. Functionally, also has diadenylate cyclase activity, catalyzing the condensation of 2 ATP molecules into cyclic di-AMP (c-di-AMP). c-di-AMP acts as a signaling molecule that couples DNA integrity with progression of sporulation. The rise in c-di-AMP level generated by DisA while scanning the chromosome, operates as a positive signal that advances sporulation; upon encountering a lesion, the DisA focus arrests at the damaged site and halts c-di-AMP synthesis. The sequence is that of DNA integrity scanning protein DisA from Bacillus licheniformis (strain ATCC 14580 / DSM 13 / JCM 2505 / CCUG 7422 / NBRC 12200 / NCIMB 9375 / NCTC 10341 / NRRL NRS-1264 / Gibson 46).